The following is a 134-amino-acid chain: Large ribosomal subunit protein bL20 (134 aa).

This sequence belongs to the bacterial ribosomal protein bL20 family.

Functionally, binds directly to 23S ribosomal RNA and is necessary for the in vitro assembly process of the 50S ribosomal subunit. It is not involved in the protein synthesizing functions of that subunit. In Rhizobium etli (strain ATCC 51251 / DSM 11541 / JCM 21823 / NBRC 15573 / CFN 42), this protein is Large ribosomal subunit protein bL20.